The primary structure comprises 1224 residues: ATP-dependent helicase/deoxyribonuclease subunit B (1224 aa).

The 326-residue stretch at Met1–Glu326 folds into the UvrD-like helicase ATP-binding domain. Gly8–Ser15 contacts ATP. Positions Gln283–Asp584 constitute a UvrD-like helicase C-terminal domain. [4Fe-4S] cluster contacts are provided by Cys841, Cys1176, Cys1179, and Cys1185.

This sequence belongs to the helicase family. AddB/RexB type 1 subfamily. In terms of assembly, heterodimer of AddA and AddB. Mg(2+) serves as cofactor. Requires [4Fe-4S] cluster as cofactor.

Its function is as follows. The heterodimer acts as both an ATP-dependent DNA helicase and an ATP-dependent, dual-direction single-stranded exonuclease. Recognizes the chi site generating a DNA molecule suitable for the initiation of homologous recombination. The AddB subunit has 5' -&gt; 3' nuclease activity but not helicase activity. The sequence is that of ATP-dependent helicase/deoxyribonuclease subunit B from Heliobacterium modesticaldum (strain ATCC 51547 / Ice1).